A 1365-amino-acid polypeptide reads, in one-letter code: DNA-directed RNA polymerase subunit beta' (1365 aa).

Residues Cys-249, Cys-316, Cys-323, and Cys-326 each coordinate Zn(2+).

This sequence belongs to the RNA polymerase beta' chain family. RpoC2 subfamily. In cyanobacteria the RNAP catalytic core is composed of 2 alpha, 1 beta, 1 beta', 1 gamma and 1 omega subunit. When a sigma factor is associated with the core the holoenzyme is formed, which can initiate transcription. Zn(2+) serves as cofactor.

The catalysed reaction is RNA(n) + a ribonucleoside 5'-triphosphate = RNA(n+1) + diphosphate. In terms of biological role, DNA-dependent RNA polymerase catalyzes the transcription of DNA into RNA using the four ribonucleoside triphosphates as substrates. The polypeptide is DNA-directed RNA polymerase subunit beta' (Synechococcus sp. (strain CC9311)).